The primary structure comprises 76 residues: Defensin-like protein 71 (76 aa).

The first 22 residues, 1–22, serve as a signal peptide directing secretion; the sequence is MAMTQVFVIFILLATSLCNSNA. Disulfide bonds link Cys-36–Cys-74, Cys-40–Cys-63, Cys-49–Cys-72, and Cys-53–Cys-73.

The protein belongs to the DEFL family.

The protein localises to the secreted. The sequence is that of Defensin-like protein 71 (LCR84) from Arabidopsis thaliana (Mouse-ear cress).